The following is a 251-amino-acid chain: Flap endonuclease Xni (251 aa).

Mg(2+) is bound at residue Asp104. The region spanning 160-249 (VQPQQLPDYW…IDGNLQQLRL (90 aa)) is the 5'-3' exonuclease domain. Leu171, Ala172, Pro180, Val182, and Ile185 together coordinate K(+). Residues 184-189 (GIGPKS) form an interaction with DNA region.

It belongs to the Xni family. Mg(2+) is required as a cofactor. It depends on K(+) as a cofactor.

Has flap endonuclease activity. During DNA replication, flap endonucleases cleave the 5'-overhanging flap structure that is generated by displacement synthesis when DNA polymerase encounters the 5'-end of a downstream Okazaki fragment. This chain is Flap endonuclease Xni, found in Escherichia coli O139:H28 (strain E24377A / ETEC).